A 554-amino-acid polypeptide reads, in one-letter code: Valerianol synthase TPS1A (554 aa).

Residues Asp-307 and Asp-311 each contribute to the Mg(2+) site. Residues 326 to 330 (VQRWD) carry the DDXXD motif motif. Asp-452, Ser-456, and Glu-460 together coordinate Mg(2+).

The protein belongs to the terpene synthase family. Mg(2+) is required as a cofactor. In terms of tissue distribution, expressed in flowers.

It carries out the reaction (2E,6E)-farnesyl diphosphate + H2O = valerianol + diphosphate. The protein operates within secondary metabolite biosynthesis; terpenoid biosynthesis. Its function is as follows. Terpene synthase that catalyzes the biosynthesis of the terpene valerianol, which is a volatile compound of floral scent. This Camellia hiemalis (Camellia) protein is Valerianol synthase TPS1A.